The sequence spans 670 residues: Probable leucine-rich repeat receptor-like protein kinase At1g68400 (670 aa).

The signal sequence occupies residues 1–29; it reads MAKSSFFNKHLLLSLLILLQSCLLSSSSS. The Extracellular portion of the chain corresponds to 30–274; that stretch reads TDSETLLNFK…KSNNTSRIST (245 aa). Residues Asn52, Asn79, Asn102, Asn109, and Asn112 are each glycosylated (N-linked (GlcNAc...) asparagine). LRR repeat units follow at residues 69–91, 92–114, 115–137, 139–162, 163–185, and 186–207; these read RVTR…TSLT, SLRV…SNLT, ALKL…ITSL, RLYR…TDLT, HLLT…NLSD, and LQDF…LSQF. N-linked (GlcNAc...) asparagine glycosylation is found at Asn149, Asn182, and Asn190. The interval 230–266 is disordered; it reads SSDPTKPGRPDEAKASPLNKPETVPSSPTSIHGGDKS. Residues 253–266 show a composition bias toward polar residues; the sequence is VPSSPTSIHGGDKS. An N-linked (GlcNAc...) asparagine glycan is attached at Asn268. A helical membrane pass occupies residues 275-295; sequence ISLIAIILGDFIILSFVSLLL. Over 296–670 the chain is Cytoplasmic; the sequence is YYCFWRQYAV…EDTCGGTTSQ (375 aa). One can recognise a Protein kinase domain in the interval 362–636; that stretch reads RASAEMLGKG…GHVVKLIEDI (275 aa). Ser364 carries the phosphoserine modification. Residues 368-376 and Lys390 contribute to the ATP site; that span reads LGKGGFGTA. Ser443 bears the Phosphoserine mark. Thr463 is subject to Phosphothreonine. The Proton acceptor role is filled by Asp491. Thr616 carries the phosphothreonine modification.

It belongs to the protein kinase superfamily. Ser/Thr protein kinase family.

Its subcellular location is the cell membrane. It carries out the reaction L-seryl-[protein] + ATP = O-phospho-L-seryl-[protein] + ADP + H(+). The catalysed reaction is L-threonyl-[protein] + ATP = O-phospho-L-threonyl-[protein] + ADP + H(+). The chain is Probable leucine-rich repeat receptor-like protein kinase At1g68400 from Arabidopsis thaliana (Mouse-ear cress).